A 448-amino-acid chain; its full sequence is Bifunctional protein GlmU (448 aa).

The interval 1–232 is pyrophosphorylase; sequence MSDRSLLVVV…ADEVAGVNSR (232 aa). Residues 11–14, Lys-25, Gln-78, and 83–84 contribute to the UDP-N-acetyl-alpha-D-glucosamine site; these read LAAG and GT. Asp-108 is a binding site for Mg(2+). Gly-144, Glu-158, Asn-173, and Asn-230 together coordinate UDP-N-acetyl-alpha-D-glucosamine. Asn-230 provides a ligand contact to Mg(2+). The linker stretch occupies residues 233-253; sequence VQLAEAEAILQRRLRLAAMAG. Residues 254-448 are N-acetyltransferase; it reads GATLVAPETV…FRAARSKPKG (195 aa). UDP-N-acetyl-alpha-D-glucosamine is bound by residues Arg-319 and Lys-337. The Proton acceptor role is filled by His-349. Residues Tyr-352 and Asn-363 each coordinate UDP-N-acetyl-alpha-D-glucosamine. Acetyl-CoA-binding positions include Ala-366, 372–373, Thr-409, and Arg-426; that span reads NY.

It in the N-terminal section; belongs to the N-acetylglucosamine-1-phosphate uridyltransferase family. In the C-terminal section; belongs to the transferase hexapeptide repeat family. Homotrimer. The cofactor is Mg(2+).

It localises to the cytoplasm. It catalyses the reaction alpha-D-glucosamine 1-phosphate + acetyl-CoA = N-acetyl-alpha-D-glucosamine 1-phosphate + CoA + H(+). The enzyme catalyses N-acetyl-alpha-D-glucosamine 1-phosphate + UTP + H(+) = UDP-N-acetyl-alpha-D-glucosamine + diphosphate. The protein operates within nucleotide-sugar biosynthesis; UDP-N-acetyl-alpha-D-glucosamine biosynthesis; N-acetyl-alpha-D-glucosamine 1-phosphate from alpha-D-glucosamine 6-phosphate (route II): step 2/2. It functions in the pathway nucleotide-sugar biosynthesis; UDP-N-acetyl-alpha-D-glucosamine biosynthesis; UDP-N-acetyl-alpha-D-glucosamine from N-acetyl-alpha-D-glucosamine 1-phosphate: step 1/1. Its pathway is bacterial outer membrane biogenesis; LPS lipid A biosynthesis. In terms of biological role, catalyzes the last two sequential reactions in the de novo biosynthetic pathway for UDP-N-acetylglucosamine (UDP-GlcNAc). The C-terminal domain catalyzes the transfer of acetyl group from acetyl coenzyme A to glucosamine-1-phosphate (GlcN-1-P) to produce N-acetylglucosamine-1-phosphate (GlcNAc-1-P), which is converted into UDP-GlcNAc by the transfer of uridine 5-monophosphate (from uridine 5-triphosphate), a reaction catalyzed by the N-terminal domain. This Xanthobacter autotrophicus (strain ATCC BAA-1158 / Py2) protein is Bifunctional protein GlmU.